A 260-amino-acid polypeptide reads, in one-letter code: 3-deoxy-manno-octulosonate cytidylyltransferase (260 aa).

Belongs to the KdsB family.

It is found in the cytoplasm. It carries out the reaction 3-deoxy-alpha-D-manno-oct-2-ulosonate + CTP = CMP-3-deoxy-beta-D-manno-octulosonate + diphosphate. The protein operates within nucleotide-sugar biosynthesis; CMP-3-deoxy-D-manno-octulosonate biosynthesis; CMP-3-deoxy-D-manno-octulosonate from 3-deoxy-D-manno-octulosonate and CTP: step 1/1. Its pathway is bacterial outer membrane biogenesis; lipopolysaccharide biosynthesis. Activates KDO (a required 8-carbon sugar) for incorporation into bacterial lipopolysaccharide in Gram-negative bacteria. This chain is 3-deoxy-manno-octulosonate cytidylyltransferase, found in Polaromonas naphthalenivorans (strain CJ2).